A 229-amino-acid chain; its full sequence is Uracil-DNA glycosylase (229 aa).

The active-site Proton acceptor is aspartate 64.

This sequence belongs to the uracil-DNA glycosylase (UDG) superfamily. UNG family.

Its subcellular location is the cytoplasm. The enzyme catalyses Hydrolyzes single-stranded DNA or mismatched double-stranded DNA and polynucleotides, releasing free uracil.. Functionally, excises uracil residues from the DNA which can arise as a result of misincorporation of dUMP residues by DNA polymerase or due to deamination of cytosine. The chain is Uracil-DNA glycosylase from Escherichia coli O45:K1 (strain S88 / ExPEC).